The following is a 274-amino-acid chain: NH(3)-dependent NAD(+) synthetase (274 aa).

Residue 46-53 (GISGGQDS) participates in ATP binding. Position 52 (aspartate 52) interacts with Mg(2+). Residue arginine 140 participates in deamido-NAD(+) binding. Threonine 160 contributes to the ATP binding site. Glutamate 165 lines the Mg(2+) pocket. The deamido-NAD(+) site is built by lysine 173 and aspartate 180. ATP-binding residues include lysine 189 and threonine 211. 260 to 261 (HK) is a binding site for deamido-NAD(+).

It belongs to the NAD synthetase family. In terms of assembly, homodimer.

It carries out the reaction deamido-NAD(+) + NH4(+) + ATP = AMP + diphosphate + NAD(+) + H(+). It participates in cofactor biosynthesis; NAD(+) biosynthesis; NAD(+) from deamido-NAD(+) (ammonia route): step 1/1. Catalyzes the ATP-dependent amidation of deamido-NAD to form NAD. Uses ammonia as a nitrogen source. In Streptococcus suis (strain 05ZYH33), this protein is NH(3)-dependent NAD(+) synthetase.